The primary structure comprises 101 residues: Urease subunit beta (101 aa).

The protein belongs to the urease beta subunit family. As to quaternary structure, heterotrimer of UreA (gamma), UreB (beta) and UreC (alpha) subunits. Three heterotrimers associate to form the active enzyme.

The protein localises to the cytoplasm. The catalysed reaction is urea + 2 H2O + H(+) = hydrogencarbonate + 2 NH4(+). It functions in the pathway nitrogen metabolism; urea degradation; CO(2) and NH(3) from urea (urease route): step 1/1. This Pseudomonas fluorescens (strain SBW25) protein is Urease subunit beta.